The chain runs to 156 residues: Small ribosomal subunit protein uS7 (156 aa).

It belongs to the universal ribosomal protein uS7 family. Part of the 30S ribosomal subunit. Contacts proteins S9 and S11.

Its function is as follows. One of the primary rRNA binding proteins, it binds directly to 16S rRNA where it nucleates assembly of the head domain of the 30S subunit. Is located at the subunit interface close to the decoding center, probably blocks exit of the E-site tRNA. This chain is Small ribosomal subunit protein uS7, found in Pseudomonas entomophila (strain L48).